Here is a 530-residue protein sequence, read N- to C-terminus: Cilia- and flagella-associated protein 97 (530 aa).

Residue Ser-19 is modified to Phosphoserine. 2 disordered regions span residues 29 to 83 (TNSV…PVEN) and 116 to 258 (IPNR…LSTP). Residues 35-49 (KQNDDPKERIDKDTK) are compositionally biased toward basic and acidic residues. Residues 50 to 63 (NVNSNTGMQTTENY) show a composition bias toward polar residues. Positions 67 to 82 (KGNERNVKFPPEHPVE) are enriched in basic and acidic residues. The segment covering 129–139 (GDYYTDGEESS) has biased composition (acidic residues). Thr-133 carries the phosphothreonine modification. 2 positions are modified to phosphoserine: Ser-138 and Ser-139. A compositionally biased stretch (low complexity) spans 170–203 (SSSSSSSLSSSSSGSGTDCLDGGSDSHLSDSSPS). Position 215 is a phosphoserine (Ser-215). The segment covering 227–236 (TETQPSSTTP) has biased composition (polar residues). Ser-245 and Ser-327 each carry phosphoserine. Positions 372–447 (KNYSFTREEV…ALLKRLEAVK (76 aa)) form a coiled coil. Disordered stretches follow at residues 395-417 (LSRQ…HPPK) and 483-530 (QYSP…TAWL). Positions 491 to 501 (SRTSSATSGLS) are enriched in polar residues.

It belongs to the CFAP97 family.

This is Cilia- and flagella-associated protein 97 from Pongo abelii (Sumatran orangutan).